Consider the following 704-residue polypeptide: Methionine--tRNA ligase (704 aa).

A 'HIGH' region motif is present at residues 17–27 (PYANGPIHLGH). Residues C148, C151, C161, and C164 each contribute to the Zn(2+) site. A 'KMSKS' region motif is present at residues 348–352 (KMSKS). ATP is bound at residue K351. Residues 603-704 (ELSKVELRVG…KDAKPGDRLK (102 aa)) form the tRNA-binding domain.

Belongs to the class-I aminoacyl-tRNA synthetase family. MetG type 1 subfamily. In terms of assembly, homodimer. The cofactor is Zn(2+).

It is found in the cytoplasm. It catalyses the reaction tRNA(Met) + L-methionine + ATP = L-methionyl-tRNA(Met) + AMP + diphosphate. Functionally, is required not only for elongation of protein synthesis but also for the initiation of all mRNA translation through initiator tRNA(fMet) aminoacylation. This chain is Methionine--tRNA ligase, found in Leptospira borgpetersenii serovar Hardjo-bovis (strain L550).